Consider the following 160-residue polypeptide: Surface-adhesin protein E (160 aa).

Positions 1–15 are cleaved as a signal peptide; that stretch reads MKKIILTLSLGLLTA. Cys-16 carries the N-palmitoyl cysteine lipid modification. Cys-16 carries S-diacylglycerol cysteine lipidation. The interval 41 to 68 is interaction with laminin and plasminogen; sequence IRLVKNVNYYIDSESIWVDNQEPQIVHF. The segment at 84-108 is interaction with vitronectin and epithelial cells; the sequence is PKRYARSVRQYKILNCANYHLTQVR.

Homodimer. Interacts with host vitronectin, laminin and plasminogen. Can interact with both immobilized and soluble vitronectin.

It localises to the cell outer membrane. The protein resides in the cell surface. In terms of biological role, acts as a multifunctional adhesin involved in direct interactions with host epithelial cells and host proteins, including vitronectin, laminin and plasminogen. In addition, interaction with serum vitronectin plays an important role in bacterial serum resistance, and conversion of plasminogen to plasmin at the cell surface aids in immune evasion and contributes to bacterial virulence. Induces a pro-inflammatory epithelial cell response, leading to interleukin-8 (IL-8) secretion and up-regulation of ICAM1. The polypeptide is Surface-adhesin protein E (pe) (Haemophilus influenzae (strain NTHi 3655)).